Here is a 446-residue protein sequence, read N- to C-terminus: Glutamyl-tRNA reductase (446 aa).

Residues 49–52, S108, 113–115, and Q119 each bind substrate; these read TCNR and ETQ. The active-site Nucleophile is the C50. 188-193 lines the NADP(+) pocket; it reads GAGKMS.

This sequence belongs to the glutamyl-tRNA reductase family. In terms of assembly, homodimer.

It catalyses the reaction (S)-4-amino-5-oxopentanoate + tRNA(Glu) + NADP(+) = L-glutamyl-tRNA(Glu) + NADPH + H(+). It functions in the pathway porphyrin-containing compound metabolism; protoporphyrin-IX biosynthesis; 5-aminolevulinate from L-glutamyl-tRNA(Glu): step 1/2. Functionally, catalyzes the NADPH-dependent reduction of glutamyl-tRNA(Glu) to glutamate 1-semialdehyde (GSA). This Desulforudis audaxviator (strain MP104C) protein is Glutamyl-tRNA reductase.